We begin with the raw amino-acid sequence, 64 residues long: UPF0434 protein MADE_1009415 (64 aa).

Belongs to the UPF0434 family.

The sequence is that of UPF0434 protein MADE_1009415 from Alteromonas mediterranea (strain DSM 17117 / CIP 110805 / LMG 28347 / Deep ecotype).